The following is a 188-amino-acid chain: Elongation factor P (188 aa).

This sequence belongs to the elongation factor P family.

It localises to the cytoplasm. It functions in the pathway protein biosynthesis; polypeptide chain elongation. In terms of biological role, involved in peptide bond synthesis. Stimulates efficient translation and peptide-bond synthesis on native or reconstituted 70S ribosomes in vitro. Probably functions indirectly by altering the affinity of the ribosome for aminoacyl-tRNA, thus increasing their reactivity as acceptors for peptidyl transferase. In Rhodopseudomonas palustris (strain ATCC BAA-98 / CGA009), this protein is Elongation factor P.